Reading from the N-terminus, the 501-residue chain is Sensor histidine kinase PdtaS (501 aa).

The GAF stretch occupies residues 4-150 (LGDLLAEHTV…HLETAYRLCA (147 aa)). A PAS-like region spans residues 179–291 (DGFIRLDVDG…TEVKRRDRAL (113 aa)). One can recognise a Histidine kinase domain in the interval 300–495 (EIHHRVKNNL…DVVLRVPVGR (196 aa)). His303 carries the post-translational modification Phosphohistidine; by autocatalysis.

In terms of processing, autophosphorylated.

It is found in the cytoplasm. The catalysed reaction is ATP + protein L-histidine = ADP + protein N-phospho-L-histidine.. Functionally, member of the two-component regulatory system PdtaR/PdtaS. This two-component system plays an essential role in mycobacterial adaptation to poor nutrient conditions. Nutrient deprivation results in increasing intracellular concentrations of cyclic diguanosine monophosphate (c-di-GMP), which binds to the PdtaS sensor and promotes its autophosphorylation, leading to the activation of the signaling cascade. The phosphate group is then transferred to PdtaR. In addition, the PdtaR/PdtaS two-component system controls copper and nitric oxide (NO) resistance downstream of the intramembrane protease Rip1. This coupled Rip1/PdtaS/PdtaR circuit controls NO resistance and acute lung infection in mice by relieving PdtaR/PdtaS-mediated repression of isonitrile chalkophore biosynthesis. Two signals are required to fully inactivate the PdtaR/PdtaS system and mediate NO resistance: a cytoplasmic inhibitory signal through the PdtaS kinase mediated by direct sensing of NO and the production of PPE1-5', an NO-induced small RNA, to sequester PdtaR. In Mycobacterium tuberculosis (strain CDC 1551 / Oshkosh), this protein is Sensor histidine kinase PdtaS (pdtaS).